A 235-amino-acid polypeptide reads, in one-letter code: Eukaryotic translation initiation factor 4E-1 (235 aa).

Basic and acidic residues predominate over residues 16-25 (VNKHRGVRSD). The interval 16–56 (VNKHRGVRSDGEEDEQLEEGEIVGGDADTLSSSSSSRPGTA) is disordered. A compositionally biased stretch (acidic residues) spans 26-36 (GEEDEQLEEGE). 2 EIF4G-binding regions span residues 60–63 (HPLE) and 70–106 (FDTPSAKSKQVAWGSSMRPIYTFSSVEEFWSLYNNIH). MRNA-binding positions include 78–83 (KQVAWG), K110, and 128–129 (WE). C133 and C171 are joined by a disulfide. Residues 154 to 163 (YTLLAMIGEQ) form an EIF4G-binding region. Residues 178 to 183 (RARQEK) and 223 to 227 (KTLDR) each bind mRNA.

Belongs to the eukaryotic initiation factor 4E family. EIF4F is a multi-subunit complex, the composition of which varies with external and internal environmental conditions. It is composed of at least EIF4A, EIF4E and EIF4G. EIF4E is also known to interact with other partners. In higher plants two isoforms of EIF4F have been identified, named isoform EIF4F and isoform EIF(iso)4F. Isoform EIF4F has subunits p220 and p26, whereas isoform EIF(iso)4F has subunits p82 and p28. In terms of assembly, (Microbial infection) Interacts with potyvirus viral genome-linked protein (VPg); this interaction is possible in susceptible hosts but impaired in resistant plants. Post-translationally, according to the redox status, the Cys-133-Cys-171 disulfide bridge may have a role in regulating protein function by affecting its ability to bind capped mRNA.

The protein localises to the nucleus. Its subcellular location is the cytoplasm. In terms of biological role, component of the protein complex eIF4F, which is involved in the recognition of the mRNA cap, ATP-dependent unwinding of 5'-terminal secondary structure and recruitment of mRNA to the ribosome. Recognizes and binds the 7-methylguanosine-containing mRNA cap during an early step in the initiation of protein synthesis and facilitates ribosome binding by inducing the unwinding of the mRNAs secondary structures. Key component of recessive resistance to potyviruses. Its function is as follows. (Microbial infection) Susceptibility host factor required for viral infection by recruiting viral RNAs to the host ribosomal complex via an interaction with viral genome-linked protein (VPg). This chain is Eukaryotic translation initiation factor 4E-1, found in Lactuca sativa (Garden lettuce).